Reading from the N-terminus, the 206-residue chain is Max dimerization protein 3 (206 aa).

An interaction with SIN3A and SIN3B region spans residues 8–25 (IQVLLQAAEFLERREREA). 2 disordered regions span residues 25-67 (AEHG…ELEK) and 146-171 (RERL…QEEL). Residues 57 to 109 (SGRSVHNELEKRRRAQLKRCLERLKQQMPLGADCARYTTLSLLRRARMHIQKL) form the bHLH domain.

In terms of assembly, efficient DNA binding requires dimerization with another bHLH protein. Binds DNA as a heterodimer with MAX. Interacts with SIN3A AND SIN3B. Interacts with RNF17.

It localises to the nucleus. Transcriptional repressor. Binds with MAX to form a sequence-specific DNA-binding protein complex which recognizes the core sequence 5'-CAC[GA]TG-3'. Antagonizes MYC transcriptional activity by competing for MAX and suppresses MYC dependent cell transformation. The polypeptide is Max dimerization protein 3 (MXD3) (Homo sapiens (Human)).